Consider the following 240-residue polypeptide: Ubiquinone biosynthesis O-methyltransferase (240 aa).

The S-adenosyl-L-methionine site is built by Arg44, Gly64, Asp85, and Met129.

This sequence belongs to the methyltransferase superfamily. UbiG/COQ3 family.

The enzyme catalyses a 3-demethylubiquinol + S-adenosyl-L-methionine = a ubiquinol + S-adenosyl-L-homocysteine + H(+). It catalyses the reaction a 3-(all-trans-polyprenyl)benzene-1,2-diol + S-adenosyl-L-methionine = a 2-methoxy-6-(all-trans-polyprenyl)phenol + S-adenosyl-L-homocysteine + H(+). It functions in the pathway cofactor biosynthesis; ubiquinone biosynthesis. O-methyltransferase that catalyzes the 2 O-methylation steps in the ubiquinone biosynthetic pathway. This chain is Ubiquinone biosynthesis O-methyltransferase, found in Escherichia coli O157:H7.